A 281-amino-acid chain; its full sequence is 2,3,4,5-tetrahydropyridine-2,6-dicarboxylate N-succinyltransferase (281 aa).

2 residues coordinate substrate: Arg108 and Asp145.

It belongs to the transferase hexapeptide repeat family. In terms of assembly, homotrimer.

It is found in the cytoplasm. The enzyme catalyses (S)-2,3,4,5-tetrahydrodipicolinate + succinyl-CoA + H2O = (S)-2-succinylamino-6-oxoheptanedioate + CoA. Its pathway is amino-acid biosynthesis; L-lysine biosynthesis via DAP pathway; LL-2,6-diaminopimelate from (S)-tetrahydrodipicolinate (succinylase route): step 1/3. The polypeptide is 2,3,4,5-tetrahydropyridine-2,6-dicarboxylate N-succinyltransferase (Nitrobacter hamburgensis (strain DSM 10229 / NCIMB 13809 / X14)).